A 213-amino-acid polypeptide reads, in one-letter code: Adenylate kinase (213 aa).

10 to 15 (GSGKGT) is an ATP binding site. An NMP region spans residues 30 to 59 (SVGDLLRNIISSSSELGKKIKGTVESGNLI). AMP-binding positions include Arg36, 57 to 59 (NLI), 83 to 86 (GFPR), and Gln90. An LID region spans residues 125 to 160 (NRLACLDCKSIYSVSSFKSTTCAKCKSTRLEKRIDD). ATP is bound at residue Arg126. Zn(2+) contacts are provided by Cys129 and Cys132. Residue 135–136 (IY) coordinates ATP. Residues Cys146 and Cys149 each coordinate Zn(2+). The AMP site is built by Arg157 and Arg169. Leu195 lines the ATP pocket.

The protein belongs to the adenylate kinase family. As to quaternary structure, monomer.

The protein resides in the cytoplasm. The catalysed reaction is AMP + ATP = 2 ADP. It functions in the pathway purine metabolism; AMP biosynthesis via salvage pathway; AMP from ADP: step 1/1. Catalyzes the reversible transfer of the terminal phosphate group between ATP and AMP. Plays an important role in cellular energy homeostasis and in adenine nucleotide metabolism. This is Adenylate kinase from Wolbachia sp. subsp. Drosophila simulans (strain wRi).